We begin with the raw amino-acid sequence, 144 residues long: Large ribosomal subunit protein uL15 (144 aa).

Residues 1–53 form a disordered region; sequence MRLNTLSPADGSKHAPKRLGRGIGSGLGKTGGRGHKGQNSRSGGGVRRGFEGG. The span at 21 to 31 shows a compositional bias: gly residues; that stretch reads RGIGSGLGKTG.

It belongs to the universal ribosomal protein uL15 family. Part of the 50S ribosomal subunit.

In terms of biological role, binds to the 23S rRNA. The chain is Large ribosomal subunit protein uL15 from Erwinia tasmaniensis (strain DSM 17950 / CFBP 7177 / CIP 109463 / NCPPB 4357 / Et1/99).